Reading from the N-terminus, the 281-residue chain is Acetyl-coenzyme A carboxylase carboxyl transferase subunit beta (281 aa).

The region spanning 23 to 281 (LWSKCEDCGA…KTLAMMRVEG (259 aa)) is the CoA carboxyltransferase N-terminal domain. Zn(2+) contacts are provided by cysteine 27, cysteine 30, cysteine 46, and cysteine 49. The C4-type zinc-finger motif lies at 27–49 (CEDCGAMLHRRQLEENLNTCNEC).

Belongs to the AccD/PCCB family. Acetyl-CoA carboxylase is a heterohexamer composed of biotin carboxyl carrier protein (AccB), biotin carboxylase (AccC) and two subunits each of ACCase subunit alpha (AccA) and ACCase subunit beta (AccD). Zn(2+) serves as cofactor.

It is found in the cytoplasm. It catalyses the reaction N(6)-carboxybiotinyl-L-lysyl-[protein] + acetyl-CoA = N(6)-biotinyl-L-lysyl-[protein] + malonyl-CoA. The protein operates within lipid metabolism; malonyl-CoA biosynthesis; malonyl-CoA from acetyl-CoA: step 1/1. Component of the acetyl coenzyme A carboxylase (ACC) complex. Biotin carboxylase (BC) catalyzes the carboxylation of biotin on its carrier protein (BCCP) and then the CO(2) group is transferred by the transcarboxylase to acetyl-CoA to form malonyl-CoA. This Chlorobium luteolum (strain DSM 273 / BCRC 81028 / 2530) (Pelodictyon luteolum) protein is Acetyl-coenzyme A carboxylase carboxyl transferase subunit beta.